A 160-amino-acid chain; its full sequence is Eukaryotic translation initiation factor 5A-3 (160 aa).

Residues Met1–Ala12 show a composition bias toward basic and acidic residues. A disordered region spans residues Met1–Pro21. A Hypusine modification is found at Lys52.

It belongs to the eIF-5A family. In terms of processing, lys-52 undergoes hypusination, a unique post-translational modification that consists in the addition of a butylamino group from spermidine to lysine side chain, leading to the formation of the unusual amino acid hypusine. eIF-5As are the only known proteins to undergo this modification, which is essential for their function.

Translation factor that promotes translation elongation and termination, particularly upon ribosome stalling at specific amino acid sequence contexts. Binds between the exit (E) and peptidyl (P) site of the ribosome and promotes rescue of stalled ribosome: specifically required for efficient translation of polyproline-containing peptides as well as other motifs that stall the ribosome. Acts as a ribosome quality control (RQC) cofactor by joining the RQC complex to facilitate peptidyl transfer during CAT tailing step. This Solanum tuberosum (Potato) protein is Eukaryotic translation initiation factor 5A-3 (EIF5A3).